The following is a 232-amino-acid chain: Uracil-DNA glycosylase (232 aa).

Aspartate 71 functions as the Proton acceptor in the catalytic mechanism.

It belongs to the uracil-DNA glycosylase (UDG) superfamily. UNG family.

The protein localises to the cytoplasm. The catalysed reaction is Hydrolyzes single-stranded DNA or mismatched double-stranded DNA and polynucleotides, releasing free uracil.. Its function is as follows. Excises uracil residues from the DNA which can arise as a result of misincorporation of dUMP residues by DNA polymerase or due to deamination of cytosine. In Azotobacter vinelandii (strain DJ / ATCC BAA-1303), this protein is Uracil-DNA glycosylase.